The sequence spans 104 residues: uncharacterized protein (104 aa).

Residues 72–92 traverse the membrane as a helical segment; the sequence is LIFSHNIVIIVSPIYMISFII.

Its subcellular location is the membrane. This is an uncharacterized protein from Saccharomyces cerevisiae (strain ATCC 204508 / S288c) (Baker's yeast).